Consider the following 100-residue polypeptide: MKFSKLSITLAVILTQAVFVLCGMKNEDFMEKGLESNELHDAIKKPVNSGKPDTERLLDCVLSRVCSSDANCCGLTPTCKMGLCVPKVGGLLGGLLGGIL.

An N-terminal signal peptide occupies residues 1–23 (MKFSKLSITLAVILTQAVFVLCG). Residues 24-55 (MKNEDFMEKGLESNELHDAIKKPVNSGKPDTE) constitute a propeptide that is removed on maturation. Disulfide bonds link C60–C73, C66–C79, and C72–C84.

The protein belongs to the neurotoxin 15 family. 02 (omega-actx) subfamily. Expressed by the venom gland.

It is found in the secreted. In terms of biological role, potent inhibitor of insect, but not mammalian, voltage-gated calcium channels (Cav). The protein is Omega-hexatoxin-Asp2b of Atrax sp. (strain Illawarra) (Funnel-web spider).